The following is a 260-amino-acid chain: Tryptophan 2,3-dioxygenase (260 aa).

Residues 34–38 and Arg100 contribute to the substrate site; that span reads FIVIH. His219 serves as a coordination point for heme. Thr233 lines the substrate pocket.

It belongs to the tryptophan 2,3-dioxygenase family. In terms of assembly, homotetramer. It depends on heme as a cofactor.

It catalyses the reaction L-tryptophan + O2 = N-formyl-L-kynurenine. Its pathway is amino-acid degradation; L-tryptophan degradation via kynurenine pathway; L-kynurenine from L-tryptophan: step 1/2. Its function is as follows. Heme-dependent dioxygenase that catalyzes the oxidative cleavage of the L-tryptophan (L-Trp) pyrrole ring and converts L-tryptophan to N-formyl-L-kynurenine. Catalyzes the oxidative cleavage of the indole moiety. This is Tryptophan 2,3-dioxygenase from Herpetosiphon aurantiacus (strain ATCC 23779 / DSM 785 / 114-95).